A 607-amino-acid polypeptide reads, in one-letter code: Fatty acid amide hydrolase (607 aa).

Catalysis depends on charge relay system residues Lys-205 and Ser-281. Residue 302–305 (GGGS) participates in substrate binding. Catalysis depends on Ser-305, which acts as the Acyl-ester intermediate.

The protein belongs to the amidase family. In terms of assembly, forms homodimers. Expressed in roots, leaves and flowers. Expressed in seedlings, flowers, roots, siliques, seeds and leaves.

The protein resides in the endoplasmic reticulum membrane. It localises to the cell membrane. The enzyme catalyses N-(5Z,8Z,11Z,14Z-eicosatetraenoyl)-ethanolamine + H2O = ethanolamine + (5Z,8Z,11Z,14Z)-eicosatetraenoate. The catalysed reaction is N-(9Z,12Z-octadecadienoyl)-ethanolamine + H2O = ethanolamine + (9Z,12Z)-octadecadienoate. It catalyses the reaction N-hexadecanoylethanolamine + H2O = ethanolamine + hexadecanoate. It carries out the reaction N-tetradecanoylethanolamine + H2O = tetradecanoate + ethanolamine. The enzyme catalyses N-dodecanoylethanolamine + H2O = dodecanoate + ethanolamine. Its activity is regulated as follows. Inhibited by methyl arachidonyl fluorophosphonate (MAFP). Its function is as follows. Catalyzes the hydrolysis of bioactive endogenous fatty acid amides to their corresponding acids. The hydrolysis of endogenous amidated lipids terminates their participation as lipid mediators in various signaling systems. Converts a wide range of N-acylethanolamines (NAEs) to their corresponding free fatty acids and ethanolamine. Can use oleamide as substrate, but not indole-3-acetamide, 1-naphtalene-acetamide, nicotinic acid amide or L-asparagine. Can use 2-arachidonylglycerol as substrate. Participates in the regulation of plant growth. Hydrolyzes N-dodecanoylethanolamine, which is has a growth inhibitory effect on seedling growth. Involved in plant defense signaling. Involved in abscisic acid (ABA) signaling through mechanisms that are independent of the catalytic activity. Involved in the regulation of flowering time. Catalyzes the hydrolysis of N-acyl L-homoserine lactones (AHLs), which are a class of signaling molecules produced by bacteria for quorum sensing. Accumulation of L-homoserine appears to encourage plant growth at low concentrations by stimulating transpiration, but higher concentrations inhibit growth by stimulating ethylene production. In Arabidopsis thaliana (Mouse-ear cress), this protein is Fatty acid amide hydrolase.